We begin with the raw amino-acid sequence, 521 residues long: Bifunctional purine biosynthesis protein PurH (521 aa).

One can recognise an MGS-like domain in the interval 1–145 (MIKQALISVS…KNHKDVIVIC (145 aa)).

The protein belongs to the PurH family.

It carries out the reaction (6R)-10-formyltetrahydrofolate + 5-amino-1-(5-phospho-beta-D-ribosyl)imidazole-4-carboxamide = 5-formamido-1-(5-phospho-D-ribosyl)imidazole-4-carboxamide + (6S)-5,6,7,8-tetrahydrofolate. The catalysed reaction is IMP + H2O = 5-formamido-1-(5-phospho-D-ribosyl)imidazole-4-carboxamide. It participates in purine metabolism; IMP biosynthesis via de novo pathway; 5-formamido-1-(5-phospho-D-ribosyl)imidazole-4-carboxamide from 5-amino-1-(5-phospho-D-ribosyl)imidazole-4-carboxamide (10-formyl THF route): step 1/1. It functions in the pathway purine metabolism; IMP biosynthesis via de novo pathway; IMP from 5-formamido-1-(5-phospho-D-ribosyl)imidazole-4-carboxamide: step 1/1. The polypeptide is Bifunctional purine biosynthesis protein PurH (Janthinobacterium sp. (strain Marseille) (Minibacterium massiliensis)).